Consider the following 837-residue polypeptide: Periplasmic nitrate reductase (837 aa).

A signal peptide (tat-type signal) is located at residues M1–A32. In terms of domain architecture, 4Fe-4S Mo/W bis-MGD-type spans L44–D100. [4Fe-4S] cluster-binding residues include C51, C54, C58, and C86. Mo-bis(molybdopterin guanine dinucleotide) contacts are provided by residues K88, Q155, N180, C184, W217 to M224, S248 to H252, Q267 to D269, M378, Q382, N488, S514 to D515, K537, D564, and T724 to S733. W800 provides a ligand contact to substrate. 2 residues coordinate Mo-bis(molybdopterin guanine dinucleotide): N808 and K825.

It belongs to the prokaryotic molybdopterin-containing oxidoreductase family. NasA/NapA/NarB subfamily. As to quaternary structure, component of the periplasmic nitrate reductase NapAB complex composed of NapA and NapB. It depends on [4Fe-4S] cluster as a cofactor. Mo-bis(molybdopterin guanine dinucleotide) serves as cofactor. Post-translationally, predicted to be exported by the Tat system. The position of the signal peptide cleavage has not been experimentally proven.

Its subcellular location is the periplasm. The enzyme catalyses 2 Fe(II)-[cytochrome] + nitrate + 2 H(+) = 2 Fe(III)-[cytochrome] + nitrite + H2O. Catalytic subunit of the periplasmic nitrate reductase complex NapAB. Receives electrons from NapB and catalyzes the reduction of nitrate to nitrite. In Bradyrhizobium diazoefficiens (strain JCM 10833 / BCRC 13528 / IAM 13628 / NBRC 14792 / USDA 110), this protein is Periplasmic nitrate reductase.